The sequence spans 371 residues: MAGSDVASEGPSPRDGATRRPGATGGLRSQAAASCPEPLSAAEAPAERGALPAWMRLYFYGMHGITLDVLVSSARRFARSLDLRMLGFSSPYRCLLHSLTHFALEQLYLQRPRCPSAFLFNFLLYPSAHVGLQTLAGQALRLSLGGGPGGAAAPALGALDLALQYVLALYHGQVFLKRFLCLRYPRRRDQHTRDTLPAARDAQILWEAGGQRRGPGGARGTERSPTQGLPDLLRFLFFGMHGFLDEIFFTFFFNVLGQGDRASSGHTSLWSFFMYGSCSFVVEKLYFHLHYSRGWGTWKRVPIYVIFIYAWEFSWGLGLRMCGACSWDYSHYPLNFMGLITLMYLPGWLFLSVYQDLLSNVLWRVQYVPTN.

Residues 1–30 (MAGSDVASEGPSPRDGATRRPGATGGLRSQ) are disordered. The next 6 helical transmembrane spans lie at 51–71 (LPAW…DVLV), 117–137 (AFLF…TLAG), 235–255 (FLFF…FFNV), 269–289 (LWSF…YFHL), 301–321 (VPIY…GLRM), and 334–354 (LNFM…LSVY).

The protein belongs to the TMEM229 family.

The protein resides in the membrane. The sequence is that of Transmembrane protein 229A (Tmem229a) from Mus musculus (Mouse).